The following is a 1193-amino-acid chain: DNA-directed RNA polymerase subunit beta (1193 aa).

A disordered region spans residues 1173–1193; sequence QQAKEAAELEKAKEEALDKTE. The segment covering 1177 to 1193 has biased composition (basic and acidic residues); the sequence is EAAELEKAKEEALDKTE.

This sequence belongs to the RNA polymerase beta chain family. The RNAP catalytic core consists of 2 alpha, 1 beta, 1 beta' and 1 omega subunit. When a sigma factor is associated with the core the holoenzyme is formed, which can initiate transcription.

It catalyses the reaction RNA(n) + a ribonucleoside 5'-triphosphate = RNA(n+1) + diphosphate. Functionally, DNA-dependent RNA polymerase catalyzes the transcription of DNA into RNA using the four ribonucleoside triphosphates as substrates. The protein is DNA-directed RNA polymerase subunit beta of Streptococcus thermophilus (strain CNRZ 1066).